We begin with the raw amino-acid sequence, 81 residues long: Photosystem I iron-sulfur center (81 aa).

4Fe-4S ferredoxin-type domains are found at residues A2–W31 and I39–Y68. 8 residues coordinate [4Fe-4S] cluster: C11, C14, C17, C21, C48, C51, C54, and C58.

The eukaryotic PSI reaction center is composed of at least 11 subunits. The cofactor is [4Fe-4S] cluster.

The protein localises to the plastid. The protein resides in the chloroplast thylakoid membrane. It catalyses the reaction reduced [plastocyanin] + hnu + oxidized [2Fe-2S]-[ferredoxin] = oxidized [plastocyanin] + reduced [2Fe-2S]-[ferredoxin]. In terms of biological role, apoprotein for the two 4Fe-4S centers FA and FB of photosystem I (PSI); essential for photochemical activity. FB is the terminal electron acceptor of PSI, donating electrons to ferredoxin. The C-terminus interacts with PsaA/B/D and helps assemble the protein into the PSI complex. Required for binding of PsaD and PsaE to PSI. PSI is a plastocyanin/cytochrome c6-ferredoxin oxidoreductase, converting photonic excitation into a charge separation, which transfers an electron from the donor P700 chlorophyll pair to the spectroscopically characterized acceptors A0, A1, FX, FA and FB in turn. The chain is Photosystem I iron-sulfur center from Gracilaria tenuistipitata var. liui (Red alga).